Here is a 1132-residue protein sequence, read N- to C-terminus: Telomerase reverse transcriptase (1132 aa).

The segment at 1–66 (MSAKKPVQSK…NQNNANSGGN (66 aa)) is disordered. Composition is skewed to polar residues over residues 9–26 (SKLNIGNPTIPVTSNRST) and 45–55 (QSQNTTTGAFR). Positions 602-956 (KEMRIFCESQ…DLFHWIGISI (355 aa)) constitute a Reverse transcriptase domain. Positions 708, 886, and 887 each coordinate Mg(2+).

It belongs to the reverse transcriptase family. Telomerase subfamily.

It localises to the nucleus. Its subcellular location is the chromosome. The protein resides in the telomere. The catalysed reaction is DNA(n) + a 2'-deoxyribonucleoside 5'-triphosphate = DNA(n+1) + diphosphate. Functionally, telomerase is a ribonucleoprotein enzyme essential for the replication of chromosome termini in most eukaryotes. It elongates telomeres. It is a reverse transcriptase that adds simple sequence repeats to chromosome ends by copying a template sequence within the RNA component of the enzyme. The sequence is that of Telomerase reverse transcriptase (TERT) from Oxytricha trifallax (Sterkiella histriomuscorum).